A 1060-amino-acid chain; its full sequence is Carbamoyl phosphate synthase large chain (1060 aa).

The tract at residues 1 to 400 (MPRDESINKV…SLNKAIRSLD (400 aa)) is carboxyphosphate synthetic domain. Arg-127, Arg-167, Gly-173, Gly-174, Gln-206, Val-208, Glu-213, Gly-240, Ile-241, His-242, Gln-283, and Glu-297 together coordinate ATP. The ATP-grasp 1 domain occupies 131–326 (DSFMKKLNEP…IAKIAAKIAV (196 aa)). Positions 283, 297, and 299 each coordinate Mg(2+). Mn(2+) is bound by residues Gln-283, Glu-297, and Asn-299. An oligomerization domain region spans residues 401-539 (IGADGFTETP…YGCYDLEDEV (139 aa)). Residues 540 to 926 (EVSDRRKVLI…YKSQLSASMD (387 aa)) are carbamoyl phosphate synthetic domain. The ATP-grasp 2 domain occupies 664 to 858 (TEVLNKLGIP…LAKMAARLMM (195 aa)). The ATP site is built by Arg-700, Lys-739, Leu-741, Glu-746, Gly-771, Val-772, His-773, Ser-774, Gln-814, and Glu-829. Mg(2+) contacts are provided by Gln-814, Glu-829, and Asn-831. Residues Gln-814, Glu-829, and Asn-831 each contribute to the Mn(2+) site. One can recognise an MGS-like domain in the interval 925–1060 (MDLLNEGKVF…VKSLDEYHGM (136 aa)). Positions 927-1060 (LLNEGKVFIS…VKSLDEYHGM (134 aa)) are allosteric domain.

The protein belongs to the CarB family. As to quaternary structure, composed of two chains; the small (or glutamine) chain promotes the hydrolysis of glutamine to ammonia, which is used by the large (or ammonia) chain to synthesize carbamoyl phosphate. Tetramer of heterodimers (alpha,beta)4. Mg(2+) serves as cofactor. It depends on Mn(2+) as a cofactor.

The catalysed reaction is hydrogencarbonate + L-glutamine + 2 ATP + H2O = carbamoyl phosphate + L-glutamate + 2 ADP + phosphate + 2 H(+). It carries out the reaction hydrogencarbonate + NH4(+) + 2 ATP = carbamoyl phosphate + 2 ADP + phosphate + 2 H(+). It participates in amino-acid biosynthesis; L-arginine biosynthesis; carbamoyl phosphate from bicarbonate: step 1/1. Its pathway is pyrimidine metabolism; UMP biosynthesis via de novo pathway; (S)-dihydroorotate from bicarbonate: step 1/3. Functionally, large subunit of the glutamine-dependent carbamoyl phosphate synthetase (CPSase). CPSase catalyzes the formation of carbamoyl phosphate from the ammonia moiety of glutamine, carbonate, and phosphate donated by ATP, constituting the first step of 2 biosynthetic pathways, one leading to arginine and/or urea and the other to pyrimidine nucleotides. The large subunit (synthetase) binds the substrates ammonia (free or transferred from glutamine from the small subunit), hydrogencarbonate and ATP and carries out an ATP-coupled ligase reaction, activating hydrogencarbonate by forming carboxy phosphate which reacts with ammonia to form carbamoyl phosphate. This Methanothermobacter thermautotrophicus (strain ATCC 29096 / DSM 1053 / JCM 10044 / NBRC 100330 / Delta H) (Methanobacterium thermoautotrophicum) protein is Carbamoyl phosphate synthase large chain.